A 1175-amino-acid chain; its full sequence is MEGSLLVASSASNNETANNVESTDGATRRISFAKIHEPLDVPNLLALQTESFDWLVGNGRWQDRMQKAVDAGDESVATTSGLSDIFEEISPIEDFQGTMSLSFSEPEFADPKYTMAECKDRDATFSAPLYVKAEFMNNNTGEIKQQTVFMGDFPLMTEKGTFVINGTERVVVSQLVRSPGAYFERTADKTSDKDIFTAKIIPSRGAWFELEIDKRDQVGVRLDRKRKQSVTVLLKALGWTESQILEEFGEFDSIRATLEKDGTSTREDALLDIYRKLRPGEPPTVEAAQTLLDNLYFNPKRYDLAKVGRYKINRKLGIDKSLASPDASVLDINDIVAIIKFLVTLHAGGKSLTAKRDGKDFELRVDVDDIDHFGNRRIRAVGELIENQVRTGLSRMERVVRERMTTQDVEAITPQTLINIRPVVAAIKEFFGTSQLSQFMDQNNPLAGLTHKRRLSALGPGGLSRDRAGYEVRDVHPSHYGRMCPIETPEGPNIGLIGSLASYGRINPLGFIETPYRKVSKGHVSDEVDYLTADDELNYIIAQANAPLDSKSSFVEDQVLVRQRGGGGEPVLVAADDVEYMDVSPRQMVSVATALIPFLEHDDANRALMGANMQRQAVPLVRSEAPVVGTGMERAAAVDAGDVVIAKKAGVVTEVSADLVIMLNDDGTETNYRIAKYNRSNQGTAYNQRVLVSEGARLEVGGIIADGPATDQGELALGKNLLVAFMSWEGHNFEDAIILSQRLVSEDVLSSIHIEEHEIDARDTKLGAEEITRDIPNVSEEILAGLDERGIIHIGAEVDAGDILVGKVTPKGETELTPEERLLRAIFGDKSGEVRDTSLKVPHGESGTVIGVRFFDRENDDDLAPGVNQLVRIYVAAKRKITNGDKLAGRHGNKGVISKILPIEDMPFLADGTPVDIVLNPLGVPGRMNVGQVLELHLGWIAKTGWKIDGEPDWVKNLPNLPRETGRDQILATPVFDGAREEEISGLLDSTNVTRDGDLLINRSGKTRLFDGRSGEPFPDPISVGYMYILKLHHLVDDKIHARSTGPYSMITQQPLGGKAQFGGQRFGEMEVWALEAYGAAYTLQELLTIKSDDIHGRVKVYEAIVKGENIPEPGIPESFKVLIKEMRSLCLNVEVLSTEGSTIEMRDSDEEVFRAAEELGIDLSRAEPNSVEEV.

Residues 1 to 24 are disordered; it reads MEGSLLVASSASNNETANNVESTD. Positions 7 to 23 are enriched in low complexity; that stretch reads VASSASNNETANNVEST.

It belongs to the RNA polymerase beta chain family. The RNAP catalytic core consists of 2 alpha, 1 beta, 1 beta' and 1 omega subunit. When a sigma factor is associated with the core the holoenzyme is formed, which can initiate transcription.

It carries out the reaction RNA(n) + a ribonucleoside 5'-triphosphate = RNA(n+1) + diphosphate. DNA-dependent RNA polymerase catalyzes the transcription of DNA into RNA using the four ribonucleoside triphosphates as substrates. This is DNA-directed RNA polymerase subunit beta from Renibacterium salmoninarum (strain ATCC 33209 / DSM 20767 / JCM 11484 / NBRC 15589 / NCIMB 2235).